A 163-amino-acid polypeptide reads, in one-letter code: Transcription elongation factor GreA (163 aa).

The stretch at 49–80 (ENAEYDAARDRQSEVERRILELERILENAEII) forms a coiled coil.

It belongs to the GreA/GreB family.

Its function is as follows. Necessary for efficient RNA polymerase transcription elongation past template-encoded arresting sites. The arresting sites in DNA have the property of trapping a certain fraction of elongating RNA polymerases that pass through, resulting in locked ternary complexes. Cleavage of the nascent transcript by cleavage factors such as GreA or GreB allows the resumption of elongation from the new 3'terminus. GreA releases sequences of 2 to 3 nucleotides. The polypeptide is Transcription elongation factor GreA (Mycoplasmopsis agalactiae (strain NCTC 10123 / CIP 59.7 / PG2) (Mycoplasma agalactiae)).